Here is a 679-residue protein sequence, read N- to C-terminus: UvrABC system protein B (679 aa).

The Helicase ATP-binding domain maps to 25–176 (KGVNTGKEFQ…NLRSYLRSLV (152 aa)). 38–45 (GATGTGKT) serves as a coordination point for ATP. The Beta-hairpin signature appears at 91-114 (YYDYYQPEAYVPVSDTYIAKTASI). In terms of domain architecture, Helicase C-terminal spans 429–583 (QIEDLLSEIR…KKYNQVNGIT (155 aa)). Residues 639–674 (PDLIEKLEIKMKDAAKELNFEEAANLRDRIKKLRQK) form the UVR domain.

The protein belongs to the UvrB family. In terms of assembly, forms a heterotetramer with UvrA during the search for lesions. Interacts with UvrC in an incision complex.

The protein resides in the cytoplasm. The UvrABC repair system catalyzes the recognition and processing of DNA lesions. A damage recognition complex composed of 2 UvrA and 2 UvrB subunits scans DNA for abnormalities. Upon binding of the UvrA(2)B(2) complex to a putative damaged site, the DNA wraps around one UvrB monomer. DNA wrap is dependent on ATP binding by UvrB and probably causes local melting of the DNA helix, facilitating insertion of UvrB beta-hairpin between the DNA strands. Then UvrB probes one DNA strand for the presence of a lesion. If a lesion is found the UvrA subunits dissociate and the UvrB-DNA preincision complex is formed. This complex is subsequently bound by UvrC and the second UvrB is released. If no lesion is found, the DNA wraps around the other UvrB subunit that will check the other stand for damage. This is UvrABC system protein B from Prochlorococcus marinus (strain MIT 9301).